Reading from the N-terminus, the 140-residue chain is Small ribosomal subunit protein uS12 (140 aa).

Residues 33–55 (KEQTNVSSPQKRGVCTRVGTMTP) are disordered.

The protein belongs to the universal ribosomal protein uS12 family. As to quaternary structure, part of the 30S ribosomal subunit. Contacts proteins S8 and S17. May interact with IF1 in the 30S initiation complex.

With S4 and S5 plays an important role in translational accuracy. In terms of biological role, interacts with and stabilizes bases of the 16S rRNA that are involved in tRNA selection in the A site and with the mRNA backbone. Located at the interface of the 30S and 50S subunits, it traverses the body of the 30S subunit contacting proteins on the other side and probably holding the rRNA structure together. The combined cluster of proteins S8, S12 and S17 appears to hold together the shoulder and platform of the 30S subunit. This chain is Small ribosomal subunit protein uS12, found in Geobacillus kaustophilus (strain HTA426).